Consider the following 1322-residue polypeptide: Chitin synthase chs-1 (1322 aa).

At 1–39 (MNDGENYWNAFRSHKRSATDGPTLSPWMVTVLQATKLLL) the chain is on the extracellular side. Residues 40–60 (FALCNIVLTLGSVFSKLIVLI) traverse the membrane as a helical segment. The Cytoplasmic portion of the chain corresponds to 61–128 (MATNIVPRAH…KGQCGQLVKS (68 aa)). A helical membrane pass occupies residues 129–149 (VVVLESLRAIGLAVLSFHVFP). Residues 150–156 (QLDLARC) are Extracellular-facing. A helical membrane pass occupies residues 157-177 (LVLSACFPLVAVLQRSLVAMV). The Cytoplasmic segment spans residues 178 to 193 (SAARTGRSFRNRLGRC). A helical transmembrane segment spans residues 194-214 (FVAIPHVIMFLVLMSSCYVWA). The Extracellular segment spans residues 215–221 (LFDNKFT). Residues 222–242 (AIIALPIGVICTSAGFWESWI) traverse the membrane as a helical segment. The Cytoplasmic segment spans residues 243–269 (DTTHSGTSFDELYRLKYAVRKMNTTTK). A helical transmembrane segment spans residues 270–290 (LIVSLMRIVCTVSVLVSAVYI). Residues 291–316 (NDHKKLNSSHFVKAFFSFSTRQPHTR) lie on the Extracellular side of the membrane. N297 carries an N-linked (GlcNAc...) asparagine glycan. The chain crosses the membrane as a helical span at residues 317–337 (LLLLATGIIVLHFVMRGISRF). Residues 338–342 (LAALD) are Cytoplasmic-facing. The helical transmembrane segment at 343–363 (LHPFSFVHPLSIAPLIAYGYV) threads the bilayer. Topologically, residues 364–396 (RYACQSPTCSIARRLARFGLHWVCDQWFQSARG) are extracellular. The helical transmembrane segment at 397–417 (IASPDFYICLIWLLVGCYRGW) threads the bilayer. Residues 418-836 (RLVRQRYFDT…AISYAYIAYQ (419 aa)) are Cytoplasmic-facing. Residues 455–486 (LNRQEKTMLTEEEDISDENDELRIRNDEVDRV) adopt a coiled-coil conformation. The helical transmembrane segment at 837 to 857 (FLVIFFSMLGPAIIFTMLVFA) threads the bilayer. The Extracellular segment spans residues 858–865 (QVAAFELR). The chain crosses the membrane as a helical span at residues 866-886 (GSDVMLYNGIPIGFFIVLCFT). At 887 to 892 (TESNIQ) the chain is on the cytoplasmic side. The chain crosses the membrane as a helical span at residues 893-913 (LIYAKYMSIAYAFVMLAVLVA). The Extracellular segment spans residues 914–922 (TSSQIVLET). The helical transmembrane segment at 923–943 (VLAPTSLFIVTMVGIFFFAAC) threads the bilayer. Over 944-951 (LHPKEFTN) the chain is Cytoplasmic. A helical membrane pass occupies residues 952–972 (IIHGVVFFLMIPSTYVFLTLY). Residues 973 to 1148 (SLINLNVITW…AVAEGLASLR (176 aa)) lie on the Extracellular side of the membrane. Residues 1019–1053 (ISCREKKEHEERREKMEKKMQRMELALRSIESGAD) adopt a coiled-coil conformation. A helical transmembrane segment spans residues 1149 to 1169 (NQIAFTILLVNSLLALAIFLI). At 1170–1209 (QKHKNVLSIKFSPIKNFRWTKMNEMTGQYEETDEPLKIDP) the chain is on the cytoplasmic side. The helical transmembrane segment at 1210 to 1230 (LGMGIVVFLLIILFVQTLGML) threads the bilayer. At 1231–1322 (LHRLNTMIGA…MQRSALSTTE (92 aa)) the chain is on the extracellular side.

This sequence belongs to the chitin synthase family. Class IV subfamily.

It localises to the cell membrane. It carries out the reaction [(1-&gt;4)-N-acetyl-beta-D-glucosaminyl](n) + UDP-N-acetyl-alpha-D-glucosamine = [(1-&gt;4)-N-acetyl-beta-D-glucosaminyl](n+1) + UDP + H(+). Functionally, essential for the embryonic synthesis of chitin, a component of the eggshell. This is Chitin synthase chs-1 from Caenorhabditis elegans.